Consider the following 86-residue polypeptide: UPF0367 protein PMN2A_1492 (86 aa).

It belongs to the UPF0367 family.

The protein is UPF0367 protein PMN2A_1492 of Prochlorococcus marinus (strain NATL2A).